The following is a 470-amino-acid chain: Cannabinoid receptor 1 (470 aa).

The Extracellular segment spans residues 1-121; sequence MKSILDGLAD…TPSQQLVIAA (121 aa). The segment at 2 to 23 is required for mitochondrial localization; the sequence is KSILDGLADTTFRTITTDLLYL. Residues Asn-78 and Asn-84 are each glycosylated (N-linked (GlcNAc...) asparagine). Residues 122-142 traverse the membrane as a helical segment; the sequence is LSIILGTFTVLENMLVLVVIV. The Cytoplasmic segment spans residues 143 to 154; it reads QSRSLRCRPSYH. The chain crosses the membrane as a helical span at residues 155–175; it reads FIGSLAVADLLGSVIFVYSFV. Residues 176 to 187 lie on the Extracellular side of the membrane; sequence DFHVFHRKDSPN. The chain crosses the membrane as a helical span at residues 188–208; the sequence is VFLFKLGGVTASFTASVGSLF. Topologically, residues 209 to 232 are cytoplasmic; sequence LTAIDRYISIHRPMSYKRIVTRTK. A helical membrane pass occupies residues 233–253; that stretch reads AVIAFCMMWTIAIVIAVLPLF. Residues 254–277 lie on the Extracellular side of the membrane; that stretch reads GWNCIKLRSVCSDIFPLIDETYLM. Residues 278 to 298 traverse the membrane as a helical segment; the sequence is FWIGVTSVLLLFIVYAYMYIL. The Cytoplasmic portion of the chain corresponds to 299 to 344; sequence WKAHNHAVRMLQRGTQKSIIVHTSEDGKVHITRPDQTRMDIRLAKT. The helical transmembrane segment at 345–365 threads the bilayer; it reads LVLILVVLIICWGPLMAIMVY. Residues 366 to 377 lie on the Extracellular side of the membrane; the sequence is DVFGKINKTIKT. Residue Asn-372 is glycosylated (N-linked (GlcNAc...) asparagine). Residues 378 to 398 traverse the membrane as a helical segment; it reads VFAFCSVLCLLNSTVNPIIYA. Topologically, residues 399–470 are cytoplasmic; that stretch reads LRSKDLRNAF…VSTDTSAEAV (72 aa). A lipid anchor (S-palmitoyl cysteine) is attached at Cys-415.

Belongs to the G-protein coupled receptor 1 family. In terms of processing, palmitoylation at Cys-415 is important for recruitment at both plasma membrane and lipid rafts and association with G protein alpha subunits. In terms of tissue distribution, expressed in neurons, especially in the olfactory bulbs, telencephalic pallium, and hypothalamus and also in the midbrain and hindbrain (in the mesencephalic tegmentum and dorsolateral rhombencephalon). Expressed also in the spinal cord.

It is found in the cell membrane. Its subcellular location is the mitochondrion outer membrane. The protein resides in the cell projection. The protein localises to the axon. It localises to the presynapse. Functionally, G-protein coupled receptor for cannabinoids. Mediates many cannabinoid-induced effects in the central nervous system (CNS), as well as in peripheral tissues. Regulates cellular respiration and energy production in response to cannabinoids. Signaling typically involves reduction in cyclic AMP. The polypeptide is Cannabinoid receptor 1 (cnr1) (Xenopus laevis (African clawed frog)).